The sequence spans 340 residues: Aldose 1-epimerase (340 aa).

Residue Arg77 participates in substrate binding. The active-site Proton donor is the His172. Substrate is bound at residue Asp243. The Proton acceptor role is filled by Glu305.

It belongs to the aldose epimerase family.

The protein localises to the cytoplasm. The enzyme catalyses alpha-D-glucose = beta-D-glucose. The protein operates within carbohydrate metabolism; hexose metabolism. Mutarotase converts alpha-aldose to the beta-anomer. It is active on D-glucose, L-arabinose, D-xylose, D-galactose, maltose and lactose. This chain is Aldose 1-epimerase (galM), found in Haemophilus influenzae (strain ATCC 51907 / DSM 11121 / KW20 / Rd).